The chain runs to 331 residues: UDP-GalNAc:beta-1,3-N-acetylgalactosaminyltransferase 1 (331 aa).

Over 1–20 (MAPAVLTALPNRMSLRSLKW) the chain is Cytoplasmic. Residues 21–43 (SLLLLSLLSFLVIWYLSLPHYNV) form a helical; Signal-anchor for type II membrane protein membrane-spanning segment. At 44–331 (IERVNWMYFY…VMLRNTTCHY (288 aa)) the chain is on the lumenal side. Residues Asn-72, Asn-154, Asn-198, Asn-212, and Asn-326 are each glycosylated (N-linked (GlcNAc...) asparagine).

This sequence belongs to the glycosyltransferase 31 family. It depends on Mg(2+) as a cofactor. Detected in brain, ovary, kidney, uterus and stomach. In ovary, specifically expressed in follicular granulosa cells and shows particularly strong expression at later stages of follicle development.

The protein localises to the golgi apparatus membrane. The enzyme catalyses a globoside Gb3Cer (d18:1(4E)) + UDP-N-acetyl-alpha-D-galactosamine = a globoside Gb4Cer (d18:1(4E)) + UDP + H(+). The protein operates within protein modification; protein glycosylation. Its function is as follows. Transfers N-acetylgalactosamine onto globotriaosylceramide. Plays a critical role in preimplantation stage embryonic development. The chain is UDP-GalNAc:beta-1,3-N-acetylgalactosaminyltransferase 1 from Mus musculus (Mouse).